Consider the following 151-residue polypeptide: 3-dehydroquinate dehydratase (151 aa).

Tyr-24 (proton acceptor) is an active-site residue. Asn-76, His-82, and Asp-89 together coordinate substrate. His-102 serves as the catalytic Proton donor. Residues 103–104 and Arg-113 each bind substrate; that span reads LS.

It belongs to the type-II 3-dehydroquinase family. As to quaternary structure, homododecamer.

It carries out the reaction 3-dehydroquinate = 3-dehydroshikimate + H2O. It functions in the pathway metabolic intermediate biosynthesis; chorismate biosynthesis; chorismate from D-erythrose 4-phosphate and phosphoenolpyruvate: step 3/7. Its function is as follows. Catalyzes a trans-dehydration via an enolate intermediate. The chain is 3-dehydroquinate dehydratase from Acinetobacter baumannii (strain ATCC 17978 / DSM 105126 / CIP 53.77 / LMG 1025 / NCDC KC755 / 5377).